A 591-amino-acid chain; its full sequence is 2-succinyl-5-enolpyruvyl-6-hydroxy-3-cyclohexene-1-carboxylate synthase (591 aa).

The protein belongs to the TPP enzyme family. MenD subfamily. Homodimer. Requires Mg(2+) as cofactor. It depends on Mn(2+) as a cofactor. Thiamine diphosphate serves as cofactor.

The catalysed reaction is isochorismate + 2-oxoglutarate + H(+) = 5-enolpyruvoyl-6-hydroxy-2-succinyl-cyclohex-3-ene-1-carboxylate + CO2. It functions in the pathway quinol/quinone metabolism; 1,4-dihydroxy-2-naphthoate biosynthesis; 1,4-dihydroxy-2-naphthoate from chorismate: step 2/7. It participates in quinol/quinone metabolism; menaquinone biosynthesis. Catalyzes the thiamine diphosphate-dependent decarboxylation of 2-oxoglutarate and the subsequent addition of the resulting succinic semialdehyde-thiamine pyrophosphate anion to isochorismate to yield 2-succinyl-5-enolpyruvyl-6-hydroxy-3-cyclohexene-1-carboxylate (SEPHCHC). This is 2-succinyl-5-enolpyruvyl-6-hydroxy-3-cyclohexene-1-carboxylate synthase from Salinibacter ruber (strain DSM 13855 / M31).